The following is a 311-amino-acid chain: tRNA dimethylallyltransferase (311 aa).

Glycine 13–threonine 20 contributes to the ATP binding site. A substrate-binding site is contributed by threonine 15–threonine 20. Interaction with substrate tRNA regions lie at residues aspartate 38 to glutamine 41 and glutamine 166 to arginine 170.

It belongs to the IPP transferase family. In terms of assembly, monomer. It depends on Mg(2+) as a cofactor.

It carries out the reaction adenosine(37) in tRNA + dimethylallyl diphosphate = N(6)-dimethylallyladenosine(37) in tRNA + diphosphate. Functionally, catalyzes the transfer of a dimethylallyl group onto the adenine at position 37 in tRNAs that read codons beginning with uridine, leading to the formation of N6-(dimethylallyl)adenosine (i(6)A). The chain is tRNA dimethylallyltransferase from Staphylococcus aureus (strain MRSA252).